The sequence spans 56 residues: MAHENVWFSHPRRYGKGSRQCRVCSSHTGLIRKYGLNICRQCFREKANDIGFNKFR.

Zn(2+) is bound by residues Cys-21 and Cys-24. At Ser-25 the chain carries Phosphoserine. 2 residues coordinate Zn(2+): Cys-39 and Cys-42.

Belongs to the universal ribosomal protein uS14 family. In terms of assembly, component of the small ribosomal subunit (SSU). Mature yeast ribosomes consist of a small (40S) and a large (60S) subunit. The 40S small subunit contains 1 molecule of ribosomal RNA (18S rRNA) and 33 different proteins (encoded by 57 genes). The large 60S subunit contains 3 rRNA molecules (25S, 5.8S and 5S rRNA) and 46 different proteins (encoded by 81 genes). Zn(2+) serves as cofactor.

It is found in the cytoplasm. In terms of biological role, component of the ribosome, a large ribonucleoprotein complex responsible for the synthesis of proteins in the cell. The small ribosomal subunit (SSU) binds messenger RNAs (mRNAs) and translates the encoded message by selecting cognate aminoacyl-transfer RNA (tRNA) molecules. The large subunit (LSU) contains the ribosomal catalytic site termed the peptidyl transferase center (PTC), which catalyzes the formation of peptide bonds, thereby polymerizing the amino acids delivered by tRNAs into a polypeptide chain. The nascent polypeptides leave the ribosome through a tunnel in the LSU and interact with protein factors that function in enzymatic processing, targeting, and the membrane insertion of nascent chains at the exit of the ribosomal tunnel. The polypeptide is Small ribosomal subunit protein uS14A (Saccharomyces cerevisiae (strain ATCC 204508 / S288c) (Baker's yeast)).